Here is a 63-residue protein sequence, read N- to C-terminus: Non-structural protein 3b (63 aa).

This is Non-structural protein 3b from Avian infectious bronchitis virus (strain UK/68/84) (IBV).